The following is a 215-amino-acid chain: Porin MspC (215 aa).

The N-terminal stretch at 1-31 is a signal peptide; sequence MKAISRVLIAMISALAAAVAGLFVSAGTSHA.

Belongs to the mycobacterial porin (TC 1.B.24) family. In terms of assembly, octamers. Probably forms a goblet with the wide end on the exterior of the outer membrane and a central channel. It is not known if mixed oligomers of MspC with other Msp subunits form in vivo.

It is found in the cell outer membrane. The protein resides in the secreted. The protein localises to the cell wall. A constitutively expressed secondary porin, forms a water-filled channel which favors the permeation of cations and less efficiently phosphate. There are about 2400 porins in wild-type, 800 in an mspA deletion and 150 in a double mspA-mspC deletion. This is Porin MspC (mspC) from Mycolicibacterium smegmatis (strain ATCC 700084 / mc(2)155) (Mycobacterium smegmatis).